A 398-amino-acid chain; its full sequence is S-adenosylmethionine synthase (398 aa).

ATP is bound at residue His-26. Asp-28 lines the Mg(2+) pocket. K(+) is bound at residue Glu-54. L-methionine contacts are provided by Glu-67 and Gln-110. The flexible loop stretch occupies residues 110-120; the sequence is QSPDIAQGVNE. ATP is bound by residues 177 to 179, 243 to 244, Asp-252, 258 to 259, Ala-275, and Lys-279; these read DAK, RF, and RK. Asp-252 is a binding site for L-methionine. Lys-283 lines the L-methionine pocket.

Belongs to the AdoMet synthase family. As to quaternary structure, homotetramer; dimer of dimers. The cofactor is Mg(2+). K(+) serves as cofactor.

It is found in the cytoplasm. It catalyses the reaction L-methionine + ATP + H2O = S-adenosyl-L-methionine + phosphate + diphosphate. Its pathway is amino-acid biosynthesis; S-adenosyl-L-methionine biosynthesis; S-adenosyl-L-methionine from L-methionine: step 1/1. In terms of biological role, catalyzes the formation of S-adenosylmethionine (AdoMet) from methionine and ATP. The overall synthetic reaction is composed of two sequential steps, AdoMet formation and the subsequent tripolyphosphate hydrolysis which occurs prior to release of AdoMet from the enzyme. This is S-adenosylmethionine synthase from Desulfotalea psychrophila (strain LSv54 / DSM 12343).